An 807-amino-acid chain; its full sequence is Glycerol-3-phosphate acyltransferase (807 aa).

The HXXXXD motif motif lies at 308-313; sequence CHRSHM.

Belongs to the GPAT/DAPAT family.

Its subcellular location is the cell inner membrane. It catalyses the reaction sn-glycerol 3-phosphate + an acyl-CoA = a 1-acyl-sn-glycero-3-phosphate + CoA. It participates in phospholipid metabolism; CDP-diacylglycerol biosynthesis; CDP-diacylglycerol from sn-glycerol 3-phosphate: step 1/3. This Shewanella pealeana (strain ATCC 700345 / ANG-SQ1) protein is Glycerol-3-phosphate acyltransferase.